A 186-amino-acid chain; its full sequence is Acireductone dioxygenase (186 aa).

Fe(2+) contacts are provided by His-96, His-98, Glu-102, and His-140. Residues His-96, His-98, Glu-102, and His-140 each coordinate Ni(2+).

It belongs to the acireductone dioxygenase (ARD) family. In terms of assembly, monomer. The cofactor is Fe(2+). It depends on Ni(2+) as a cofactor.

The catalysed reaction is 1,2-dihydroxy-5-(methylsulfanyl)pent-1-en-3-one + O2 = 3-(methylsulfanyl)propanoate + CO + formate + 2 H(+). It catalyses the reaction 1,2-dihydroxy-5-(methylsulfanyl)pent-1-en-3-one + O2 = 4-methylsulfanyl-2-oxobutanoate + formate + 2 H(+). It functions in the pathway amino-acid biosynthesis; L-methionine biosynthesis via salvage pathway; L-methionine from S-methyl-5-thio-alpha-D-ribose 1-phosphate: step 5/6. Functionally, catalyzes 2 different reactions between oxygen and the acireductone 1,2-dihydroxy-3-keto-5-methylthiopentene (DHK-MTPene) depending upon the metal bound in the active site. Fe-containing acireductone dioxygenase (Fe-ARD) produces formate and 2-keto-4-methylthiobutyrate (KMTB), the alpha-ketoacid precursor of methionine in the methionine recycle pathway. Ni-containing acireductone dioxygenase (Ni-ARD) produces methylthiopropionate, carbon monoxide and formate, and does not lie on the methionine recycle pathway. In Methylococcus capsulatus (strain ATCC 33009 / NCIMB 11132 / Bath), this protein is Acireductone dioxygenase.